A 149-amino-acid chain; its full sequence is MEQSFIMIKPDGVQRGLIGDIISRFEKKGFYLRGMKFMNVERSFAQQHYADLSDKPFFPGLVEYIISGPVVAMVWEGKDVVATGRRIIGATRPWEAAPGTIRADYAVEVGRNVIHGSDSVDNGKKEIALWFPEGLAEWRSNLHPWIYES.

Lys-9, Phe-57, Arg-85, Thr-91, Arg-102, and Asn-112 together coordinate ATP. The active-site Pros-phosphohistidine intermediate is the His-115.

It belongs to the NDK family. Homohexamer. The cofactor is Mg(2+).

It catalyses the reaction a 2'-deoxyribonucleoside 5'-diphosphate + ATP = a 2'-deoxyribonucleoside 5'-triphosphate + ADP. The catalysed reaction is a ribonucleoside 5'-diphosphate + ATP = a ribonucleoside 5'-triphosphate + ADP. In terms of biological role, major role in the synthesis of nucleoside triphosphates other than ATP. The ATP gamma phosphate is transferred to the NDP beta phosphate via a ping-pong mechanism, using a phosphorylated active-site intermediate. This NDK is microtubule-associated. The polypeptide is Nucleoside diphosphate kinase 1 (NDKR) (Oryza sativa subsp. japonica (Rice)).